Consider the following 113-residue polypeptide: UPF0102 protein Shal_4069 (113 aa).

The protein belongs to the UPF0102 family.

This is UPF0102 protein Shal_4069 from Shewanella halifaxensis (strain HAW-EB4).